Reading from the N-terminus, the 503-residue chain is Cytosolic carboxypeptidase 6 (503 aa).

The Peptidase M14 domain maps to Tyr-167 to Tyr-438. Residues His-230, Glu-233, and His-328 each coordinate Zn(2+). Glu-401 (proton donor/acceptor) is an active-site residue. Composition is skewed to basic and acidic residues over residues Ile-459–Pro-469 and Lys-487–Phe-503. The tract at residues Ile-459–Phe-503 is disordered.

It belongs to the peptidase M14 family. Interacts with MYLK. Requires Zn(2+) as cofactor.

It localises to the cytoplasm. It is found in the cytosol. The protein localises to the cytoskeleton. Its subcellular location is the microtubule organizing center. The protein resides in the centrosome. It localises to the centriole. It is found in the golgi apparatus. The protein localises to the cilium basal body. It carries out the reaction (L-glutamyl)(n+1)-gamma-L-glutamyl-L-glutamyl-[protein] + H2O = (L-glutamyl)(n)-gamma-L-glutamyl-L-glutamyl-[protein] + L-glutamate. The catalysed reaction is C-terminal L-alpha-aminoacyl-L-glutamyl-L-glutamyl-[tubulin] + H2O = C-terminal L-alpha-aminoacyl-L-glutamyl-[tubulin] + L-glutamate. Its function is as follows. Metallocarboxypeptidase that mediates protein deglutamylation of tubulin and non-tubulin target proteins. Catalyzes the removal of polyglutamate side chains present on the gamma-carboxyl group of glutamate residues within the C-terminal tail of tubulin protein. Specifically cleaves tubulin long-side-chains, while it is not able to remove the branching point glutamate. Also catalyzes the removal of polyglutamate residues from the carboxy-terminus of non-tubulin proteins such as MYLK. Mediates the deglutamylation of nucleotidyltransferase CGAS, leading to CGAS antiviral defense response activation. Involved in KLF4 deglutamylation which promotes KLF4 proteasome-mediated degradation, thereby negatively regulating cell pluripotency maintenance and embryogenesis. The protein is Cytosolic carboxypeptidase 6 of Homo sapiens (Human).